Here is a 251-residue protein sequence, read N- to C-terminus: Triosephosphate isomerase (251 aa).

A substrate-binding site is contributed by 9–11 (NWK). H94 functions as the Electrophile in the catalytic mechanism. The active-site Proton acceptor is E166. Residues G172, S211, and 232–233 (GG) each bind substrate.

Belongs to the triosephosphate isomerase family. Homodimer.

It is found in the cytoplasm. It carries out the reaction D-glyceraldehyde 3-phosphate = dihydroxyacetone phosphate. The protein operates within carbohydrate biosynthesis; gluconeogenesis. It participates in carbohydrate degradation; glycolysis; D-glyceraldehyde 3-phosphate from glycerone phosphate: step 1/1. In terms of biological role, involved in the gluconeogenesis. Catalyzes stereospecifically the conversion of dihydroxyacetone phosphate (DHAP) to D-glyceraldehyde-3-phosphate (G3P). This is Triosephosphate isomerase from Stenotrophomonas maltophilia (strain K279a).